Reading from the N-terminus, the 344-residue chain is Probable dual-specificity RNA methyltransferase RlmN (344 aa).

Catalysis depends on Glu89, which acts as the Proton acceptor. A Radical SAM core domain is found at 95-329 (TDQRLTVCVS…VSLRASRGLD (235 aa)). Cysteines 102 and 334 form a disulfide. [4Fe-4S] cluster-binding residues include Cys109, Cys113, and Cys116. Residues 156–157 (GE), Ser186, 215–217 (SLH), and Asn291 each bind S-adenosyl-L-methionine. Cys334 acts as the S-methylcysteine intermediate in catalysis.

The protein belongs to the radical SAM superfamily. RlmN family. It depends on [4Fe-4S] cluster as a cofactor.

It is found in the cytoplasm. It carries out the reaction adenosine(2503) in 23S rRNA + 2 reduced [2Fe-2S]-[ferredoxin] + 2 S-adenosyl-L-methionine = 2-methyladenosine(2503) in 23S rRNA + 5'-deoxyadenosine + L-methionine + 2 oxidized [2Fe-2S]-[ferredoxin] + S-adenosyl-L-homocysteine. The enzyme catalyses adenosine(37) in tRNA + 2 reduced [2Fe-2S]-[ferredoxin] + 2 S-adenosyl-L-methionine = 2-methyladenosine(37) in tRNA + 5'-deoxyadenosine + L-methionine + 2 oxidized [2Fe-2S]-[ferredoxin] + S-adenosyl-L-homocysteine. Its function is as follows. Specifically methylates position 2 of adenine 2503 in 23S rRNA and position 2 of adenine 37 in tRNAs. In Parasynechococcus marenigrum (strain WH8102), this protein is Probable dual-specificity RNA methyltransferase RlmN.